The chain runs to 316 residues: Malate dehydrogenase (316 aa).

Residues 12-17 (GAGNIG) and aspartate 36 contribute to the NAD(+) site. Residues arginine 85 and arginine 91 each contribute to the substrate site. NAD(+) is bound by residues asparagine 98 and 121 to 123 (VTN). Substrate-binding residues include asparagine 123 and arginine 154. Histidine 178 serves as the catalytic Proton acceptor.

Belongs to the LDH/MDH superfamily. MDH type 3 family.

The enzyme catalyses (S)-malate + NAD(+) = oxaloacetate + NADH + H(+). Functionally, catalyzes the reversible oxidation of malate to oxaloacetate. This Wolbachia sp. subsp. Brugia malayi (strain TRS) protein is Malate dehydrogenase.